A 609-amino-acid chain; its full sequence is Phosphoenolpyruvate carboxykinase [GTP] (609 aa).

Substrate-binding positions include Arg81 and 220-222; that span reads YGG. Positions 229 and 249 each coordinate Mn(2+). Ser271 is a binding site for substrate. A GTP-binding site is contributed by 272–277; that stretch reads ACGKTN. Cys273 is an active-site residue. Asp296 provides a ligand contact to Mn(2+). 387–389 is a substrate binding site; sequence NSR. Residues Arg389, Arg420, and 515 to 518 contribute to the GTP site; that span reads FGEN.

It belongs to the phosphoenolpyruvate carboxykinase [GTP] family. Monomer. Mn(2+) serves as cofactor.

The protein resides in the cytoplasm. The enzyme catalyses oxaloacetate + GTP = phosphoenolpyruvate + GDP + CO2. Its pathway is carbohydrate biosynthesis; gluconeogenesis. Its function is as follows. Catalyzes the conversion of oxaloacetate (OAA) to phosphoenolpyruvate (PEP), the rate-limiting step in the metabolic pathway that produces glucose from lactate and other precursors derived from the citric acid cycle. In Mycolicibacterium paratuberculosis (strain ATCC BAA-968 / K-10) (Mycobacterium paratuberculosis), this protein is Phosphoenolpyruvate carboxykinase [GTP].